The following is a 590-amino-acid chain: 2-isopropylmalate synthase (590 aa).

Positions 40–314 constitute a Pyruvate carboxyltransferase domain; it reads PRWCAVDLRD…DPQIDFSDID (275 aa). Mg(2+)-binding residues include Asp-49, His-253, His-255, and Asn-289. The regulatory domain stretch occupies residues 456-590; the sequence is APETESDAKW…SSVPAELAGV (135 aa).

The protein belongs to the alpha-IPM synthase/homocitrate synthase family. LeuA type 2 subfamily. In terms of assembly, homodimer. Requires Mg(2+) as cofactor.

Its subcellular location is the cytoplasm. It catalyses the reaction 3-methyl-2-oxobutanoate + acetyl-CoA + H2O = (2S)-2-isopropylmalate + CoA + H(+). Its pathway is amino-acid biosynthesis; L-leucine biosynthesis; L-leucine from 3-methyl-2-oxobutanoate: step 1/4. In terms of biological role, catalyzes the condensation of the acetyl group of acetyl-CoA with 3-methyl-2-oxobutanoate (2-ketoisovalerate) to form 3-carboxy-3-hydroxy-4-methylpentanoate (2-isopropylmalate). The protein is 2-isopropylmalate synthase of Leifsonia xyli subsp. xyli (strain CTCB07).